The sequence spans 195 residues: Nucleoid occlusion factor SlmA (195 aa).

Positions 7–67 constitute an HTH tetR-type domain; it reads TNRRAQILQA…GLIEFIEETL (61 aa). A DNA-binding region (H-T-H motif) is located at residues 30 to 49; that stretch reads TTAKLAEKVGVSEAALYRHF. Residues 109-141 are a coiled coil; it reads DALMGEQDRLRARIAKLFERLETQLKQVLRERK.

Belongs to the nucleoid occlusion factor SlmA family. Homodimer. Interacts with FtsZ.

The protein resides in the cytoplasm. Its subcellular location is the nucleoid. Its function is as follows. Required for nucleoid occlusion (NO) phenomenon, which prevents Z-ring formation and cell division over the nucleoid. Acts as a DNA-associated cell division inhibitor that binds simultaneously chromosomal DNA and FtsZ, and disrupts the assembly of FtsZ polymers. SlmA-DNA-binding sequences (SBS) are dispersed on non-Ter regions of the chromosome, preventing FtsZ polymerization at these regions. This chain is Nucleoid occlusion factor SlmA, found in Alteromonas mediterranea (strain DSM 17117 / CIP 110805 / LMG 28347 / Deep ecotype).